Here is a 449-residue protein sequence, read N- to C-terminus: Ribulose bisphosphate carboxylase large chain (449 aa).

The propeptide occupies 1–2 (MS). P3 carries the N-acetylproline modification. K14 carries the post-translational modification N6,N6,N6-trimethyllysine. Substrate-binding residues include N123 and T173. K175 serves as the catalytic Proton acceptor. K177 provides a ligand contact to substrate. K201, D203, and E204 together coordinate Mg(2+). K201 carries the N6-carboxylysine modification. H294 serves as the catalytic Proton acceptor. Substrate contacts are provided by R295, H327, and S379.

Belongs to the RuBisCO large chain family. Type I subfamily. Heterohexadecamer of 8 large chains and 8 small chains; disulfide-linked. The disulfide link is formed within the large subunit homodimers. The cofactor is Mg(2+). The disulfide bond which can form in the large chain dimeric partners within the hexadecamer appears to be associated with oxidative stress and protein turnover.

The protein localises to the plastid. It is found in the chloroplast. It catalyses the reaction 2 (2R)-3-phosphoglycerate + 2 H(+) = D-ribulose 1,5-bisphosphate + CO2 + H2O. The enzyme catalyses D-ribulose 1,5-bisphosphate + O2 = 2-phosphoglycolate + (2R)-3-phosphoglycerate + 2 H(+). Functionally, ruBisCO catalyzes two reactions: the carboxylation of D-ribulose 1,5-bisphosphate, the primary event in carbon dioxide fixation, as well as the oxidative fragmentation of the pentose substrate in the photorespiration process. Both reactions occur simultaneously and in competition at the same active site. The polypeptide is Ribulose bisphosphate carboxylase large chain (Hippocratea richardiana).